The chain runs to 484 residues: Cobyric acid synthase (484 aa).

Residues 251 to 438 (ALKIAVPVLP…LHGLFASDAY (188 aa)) enclose the GATase cobBQ-type domain. C333 functions as the Nucleophile in the catalytic mechanism. Residue H430 is part of the active site.

Belongs to the CobB/CobQ family. CobQ subfamily.

It functions in the pathway cofactor biosynthesis; adenosylcobalamin biosynthesis. Catalyzes amidations at positions B, D, E, and G on adenosylcobyrinic A,C-diamide. NH(2) groups are provided by glutamine, and one molecule of ATP is hydrogenolyzed for each amidation. This Rhizobium etli (strain CIAT 652) protein is Cobyric acid synthase.